A 307-amino-acid polypeptide reads, in one-letter code: MmsAB operon regulatory protein (307 aa).

One can recognise an HTH araC/xylS-type domain in the interval 201-299 (DGLHAYMREH…GLSPSAYRQR (99 aa)). 2 consecutive DNA-binding regions (H-T-H motif) follow at residues 218 to 239 (ERLAAFCNLSKFHFVSRYKAIT) and 266 to 289 (VARVGQAVGYDDSYYFSRLFSKVM).

Its function is as follows. Regulatory protein for the mmsAB operon. Activates the transcription of the mmsAB genes. In Pseudomonas aeruginosa (strain ATCC 15692 / DSM 22644 / CIP 104116 / JCM 14847 / LMG 12228 / 1C / PRS 101 / PAO1), this protein is MmsAB operon regulatory protein.